Here is a 54-residue protein sequence, read N- to C-terminus: U-reduvitoxin-Pr7a (54 aa).

Residues 1–23 (MDFLRILLFVLACIMALFTSAIA) form the signal peptide. 3 disulfides stabilise this stretch: Cys26-Cys41, Cys33-Cys46, and Cys40-Cys53.

This sequence belongs to the venom Ptu1-like knottin family. Expressed by the venom gland.

Its subcellular location is the secreted. In terms of biological role, binds reversibly and blocks P/Q-type voltage-gated calcium channels (Cav). The protein is U-reduvitoxin-Pr7a of Platymeris rhadamanthus (Red spot assassin bug).